We begin with the raw amino-acid sequence, 245 residues long: MRVDGREKTELRHIHIHTNYLKHPEGSVLIEVGDTKVICSATIEERVPPFMRGEGKGWVTAEYAMIPRATEQRTIRESSKGKVTGRTMEIQRLIGRALRAVVDLEALGERTVWIDCDVIQADGGTRTASITGAYVAMVLAFEKLLQAEKVSKIPVKDYLAATSVGIVEEQGVVLDLNYAEDSKADVDMNVIMTGKGQFVEVQGTGEEATFSRAQLNELLDAAEKGIFQLIDMQKEALGDIVSHIE.

Phosphate is bound by residues arginine 86 and 124 to 126; that span reads GTR.

The protein belongs to the RNase PH family. Homohexameric ring arranged as a trimer of dimers.

The catalysed reaction is tRNA(n+1) + phosphate = tRNA(n) + a ribonucleoside 5'-diphosphate. Phosphorolytic 3'-5' exoribonuclease that plays an important role in tRNA 3'-end maturation. Removes nucleotide residues following the 3'-CCA terminus of tRNAs; can also add nucleotides to the ends of RNA molecules by using nucleoside diphosphates as substrates, but this may not be physiologically important. Probably plays a role in initiation of 16S rRNA degradation (leading to ribosome degradation) during starvation. In Bacillus cereus (strain G9842), this protein is Ribonuclease PH.